The primary structure comprises 144 residues: Large ribosomal subunit protein uL15 (144 aa).

The disordered stretch occupies residues 1-60 (MKMNTLKPAEGSKQSPKRLGRGIGSGLGKTGGRGHKGQTSRSGGTIRPGFEGGQQPLQRR). Residues 21-31 (RGIGSGLGKTG) are compositionally biased toward gly residues.

It belongs to the universal ribosomal protein uL15 family. In terms of assembly, part of the 50S ribosomal subunit.

Binds to the 23S rRNA. This is Large ribosomal subunit protein uL15 from Hahella chejuensis (strain KCTC 2396).